The sequence spans 233 residues: Small ribosomal subunit protein uS3 (233 aa).

In terms of domain architecture, KH type-2 spans 39–107 (VRKYLTKELE…PAQINIAEVR (69 aa)).

Belongs to the universal ribosomal protein uS3 family. Part of the 30S ribosomal subunit. Forms a tight complex with proteins S10 and S14.

Its function is as follows. Binds the lower part of the 30S subunit head. Binds mRNA in the 70S ribosome, positioning it for translation. This is Small ribosomal subunit protein uS3 from Pectobacterium carotovorum subsp. carotovorum (strain PC1).